A 95-amino-acid chain; its full sequence is Opiscorpine-1 (95 aa).

The signal sequence occupies residues 1–19 (MNNKLTALIFLGLLAIASC). Residues 55–95 (EFMCVANVDMTKSCDTHCQKASGEKGYCHGTKCKCGVPLSY) form the BetaSPN-type CS-alpha/beta domain. 3 cysteine pairs are disulfide-bonded: Cys-58/Cys-82, Cys-68/Cys-87, and Cys-72/Cys-89.

The protein belongs to the long chain scorpion toxin family. Class 3 subfamily. Expressed by the venom gland.

The protein localises to the secreted. Functionally, the short synthetic peptide (20-54) has antimicrobial activity against the yeasts F.culmorum (IC(50)=8.8 uM) and F.oxysporum (IC(50)=10 uM), and the Gram-negative bacteria E.coli. The protein is Opiscorpine-1 of Opistophthalmus carinatus (African yellow leg scorpion).